The chain runs to 156 residues: Transcriptional repressor NrdR (156 aa).

The segment at 3 to 34 (CPKCNSTHSRVVDSRHADEANAIRRRRECENC) is a zinc-finger region. The ATP-cone domain occupies 49 to 139 (LIVVKKDGTR…VYKEFKDVDQ (91 aa)).

It belongs to the NrdR family. The cofactor is Zn(2+).

In terms of biological role, negatively regulates transcription of bacterial ribonucleotide reductase nrd genes and operons by binding to NrdR-boxes. The sequence is that of Transcriptional repressor NrdR from Staphylococcus epidermidis (strain ATCC 35984 / DSM 28319 / BCRC 17069 / CCUG 31568 / BM 3577 / RP62A).